The primary structure comprises 450 residues: tRNA-2-methylthio-N(6)-dimethylallyladenosine synthase (450 aa).

One can recognise an MTTase N-terminal domain in the interval 14 to 132 (GEFFIETWGC…FPNYLNEVKK (119 aa)). Residues cysteine 23, cysteine 59, cysteine 93, cysteine 169, cysteine 173, and cysteine 176 each contribute to the [4Fe-4S] cluster site. Positions 155–385 (RKNSMKAFVT…VEVVNEISAK (231 aa)) constitute a Radical SAM core domain. The 63-residue stretch at 388 to 450 (KAYEGKIEEV…NSFSLTGEEI (63 aa)) folds into the TRAM domain.

This sequence belongs to the methylthiotransferase family. MiaB subfamily. In terms of assembly, monomer. Requires [4Fe-4S] cluster as cofactor.

The protein localises to the cytoplasm. The enzyme catalyses N(6)-dimethylallyladenosine(37) in tRNA + (sulfur carrier)-SH + AH2 + 2 S-adenosyl-L-methionine = 2-methylsulfanyl-N(6)-dimethylallyladenosine(37) in tRNA + (sulfur carrier)-H + 5'-deoxyadenosine + L-methionine + A + S-adenosyl-L-homocysteine + 2 H(+). Functionally, catalyzes the methylthiolation of N6-(dimethylallyl)adenosine (i(6)A), leading to the formation of 2-methylthio-N6-(dimethylallyl)adenosine (ms(2)i(6)A) at position 37 in tRNAs that read codons beginning with uridine. This chain is tRNA-2-methylthio-N(6)-dimethylallyladenosine synthase, found in Clostridium botulinum (strain Okra / Type B1).